The sequence spans 313 residues: HPr kinase/phosphorylase (313 aa).

Residues histidine 141 and lysine 162 contribute to the active site. 156 to 163 lines the ATP pocket; that stretch reads GKSGIGKS. Position 163 (serine 163) interacts with Mg(2+). Catalysis depends on aspartate 180, which acts as the Proton acceptor; for phosphorylation activity. Proton donor; for dephosphorylation activity. The interval 203-212 is important for the catalytic mechanism of both phosphorylation and dephosphorylation; the sequence is IEIRGIGIFD. Glutamate 204 is a Mg(2+) binding site. The active site involves arginine 247. Residues 268-273 form an important for the catalytic mechanism of dephosphorylation region; sequence PVSAGR.

This sequence belongs to the HPrK/P family. Homohexamer. Mg(2+) is required as a cofactor.

The enzyme catalyses [HPr protein]-L-serine + ATP = [HPr protein]-O-phospho-L-serine + ADP + H(+). The catalysed reaction is [HPr protein]-O-phospho-L-serine + phosphate + H(+) = [HPr protein]-L-serine + diphosphate. Its function is as follows. Catalyzes the ATP- as well as the pyrophosphate-dependent phosphorylation of a specific serine residue in HPr, a phosphocarrier protein of the phosphoenolpyruvate-dependent sugar phosphotransferase system (PTS). HprK/P also catalyzes the pyrophosphate-producing, inorganic phosphate-dependent dephosphorylation (phosphorolysis) of seryl-phosphorylated HPr (P-Ser-HPr). The two antagonistic activities of HprK/P are regulated by several intracellular metabolites, which change their concentration in response to the absence or presence of rapidly metabolisable carbon sources (glucose, fructose, etc.) in the growth medium. Therefore, by controlling the phosphorylation state of HPr, HPrK/P is a sensor enzyme that plays a major role in the regulation of carbon metabolism and sugar transport: it mediates carbon catabolite repression (CCR), and regulates PTS-catalyzed carbohydrate uptake and inducer exclusion. The protein is HPr kinase/phosphorylase of Mycoplasma mycoides subsp. mycoides SC (strain CCUG 32753 / NCTC 10114 / PG1).